The following is a 193-amino-acid chain: Interferon lambda-3 (193 aa).

Residues 1 to 19 form the signal peptide; that stretch reads MLLLLLPLLLAAVLTRTQA. Intrachain disulfides connect Cys35–Cys132, Cys69–Cys166, and Cys185–Cys192.

This sequence belongs to the lambda interferon family.

Its subcellular location is the secreted. In terms of biological role, cytokine with antiviral, antitumour and immunomodulatory activities. Plays a critical role in the antiviral host defense, predominantly in the epithelial tissues. Acts as a ligand for the heterodimeric class II cytokine receptor composed of IL10RB and IFNLR1, and receptor engagement leads to the activation of the JAK/STAT signaling pathway resulting in the expression of IFN-stimulated genes (ISG), which mediate the antiviral state. Has a restricted receptor distribution and therefore restricted targets: is primarily active in epithelial cells and this cell type-selective action is because of the epithelial cell-specific expression of its receptor IFNLR1. Seems not to be essential for early virus-activated host defense in vaginal infection, but plays an important role in Toll-like receptor (TLR)-induced antiviral defense. Plays a significant role in the antiviral immune defense in the intestinal epithelium. Exerts an immunomodulatory effect by up-regulating MHC class I antigen expression. The sequence is that of Interferon lambda-3 (Ifnl3) from Mus musculus (Mouse).